The sequence spans 494 residues: Tripartite motif-containing protein 5 (494 aa).

N-acetylalanine is present on alanine 2. The segment at 15–59 adopts an RING-type zinc-finger fold; the sequence is CPICLELLTEPLSLDCGHSFCQACITANHKESMLHQGERSCPLCR. Residues 91–132 form a B box-type zinc finger; sequence QNVDHCARHGEKLLLFCEQDGNIICWLCERSQEHRGHNTFLV. The Zn(2+) site is built by cysteine 96, histidine 99, cysteine 118, and histidine 124. The stretch at 132–223 forms a coiled coil; it reads VEEVAQKYRE…RLVQSENDMV (92 aa). The interval 186 to 199 is required for interaction with GABARAP and for autophagy; sequence FKQLRDILDCEESN. The 215-residue stretch at 280–494 folds into the B30.2/SPRY domain; it reads PDLKRMLQVL…LPMTLCSPRS (215 aa).

Belongs to the TRIM/RBCC family. In terms of assembly, can form homodimers and homotrimers. In addition to lower-order dimerization, also exhibits a higher-order multimerization and both low- and high-order multimerizations are essential for its restriction activity. Interacts with BTBD1 and BTBD2. Interacts with PSMC4, PSMC5, PSMD7 and HSPA8/HSC70. Interacts (via B30.2/SPRY domain) with HSPA1A/B. Interacts with PSMC2, MAP3K7/TAK1, TAB2 and TAB3. Interacts with SQSTM1. Interacts with TRIM6 and TRIM34. Interacts with ULK1 (phosphorylated form), GABARAP, GABARAPL1, GABARAPL2, MAP1LC3A, MAP1LC3C and BECN1. Post-translationally, degraded in a proteasome-independent fashion in the absence of viral infection but in a proteasome-dependent fashion following exposure to restriction sensitive virus. In terms of processing, autoubiquitinated in a RING finger- and UBE2D2-dependent manner. Monoubiquitinated by TRIM21. Deubiquitinated by Yersinia YopJ. Ubiquitination may not lead to proteasomal degradation.

Its subcellular location is the cytoplasm. It is found in the nucleus. It catalyses the reaction S-ubiquitinyl-[E2 ubiquitin-conjugating enzyme]-L-cysteine + [acceptor protein]-L-lysine = [E2 ubiquitin-conjugating enzyme]-L-cysteine + N(6)-ubiquitinyl-[acceptor protein]-L-lysine.. The protein operates within protein modification; protein ubiquitination. Capsid-specific restriction factor that prevents infection from non-host-adapted retroviruses. Blocks viral replication early in the life cycle, after viral entry but before reverse transcription. In addition to acting as a capsid-specific restriction factor, also acts as a pattern recognition receptor that activates innate immune signaling in response to the retroviral capsid lattice. Binding to the viral capsid triggers its E3 ubiquitin ligase activity, and in concert with the heterodimeric ubiquitin conjugating enzyme complex UBE2V1-UBE2N (also known as UBC13-UEV1A complex) generates 'Lys-63'-linked polyubiquitin chains, which in turn are catalysts in the autophosphorylation of the MAP3K7/TAK1 complex (includes TAK1, TAB2, and TAB3). Activation of the MAP3K7/TAK1 complex by autophosphorylation results in the induction and expression of NF-kappa-B and MAPK-responsive inflammatory genes, thereby leading to an innate immune response in the infected cell. Restricts infection by simian immunodeficiency virus (SIV-mac). Plays a role in regulating autophagy through activation of autophagy regulator BECN1 by causing its dissociation from its inhibitors BCL2 and TAB2. The chain is Tripartite motif-containing protein 5 (TRIM5) from Saimiri sciureus (Common squirrel monkey).